Here is a 395-residue protein sequence, read N- to C-terminus: MTTENKKGYFGEFGGSYVPEVVQKALDKLEEAYNKYKDDEEFLKEYHHYLKNYSGRETPLYFAESLTNYLGGAKIYLKREDLNHLGAHKLNNVIGQILLAKRMGKKKVIAETGAGQHGVATAAAAAKFGMQCDIYMGALDVERQRLNVFRMEILGATVHAVEKGERTLKEAVDAAFKAWINNINDTFYVLGSAVGPHPYPSMVKDFQRVISQEARRQILEKENRLPDMIIACVGGGSNAIGAFAEFIPDKEVKLIGVEAAGKGLNTDRHAATLTLGTVDVLDGMKTYALFNEDGSVKPVYSISPGLDYPGIGPEHAFLRDSKRAEYVSATDDEAVNALLLLTKKEGIIPAIESSHALAEVIKRAPKLNKNKIIIVNISGRGDKDVAAIAEYLKNK.

An N6-(pyridoxal phosphate)lysine modification is found at Lys89.

It belongs to the TrpB family. Tetramer of two alpha and two beta chains. The cofactor is pyridoxal 5'-phosphate.

The catalysed reaction is (1S,2R)-1-C-(indol-3-yl)glycerol 3-phosphate + L-serine = D-glyceraldehyde 3-phosphate + L-tryptophan + H2O. It functions in the pathway amino-acid biosynthesis; L-tryptophan biosynthesis; L-tryptophan from chorismate: step 5/5. In terms of biological role, the beta subunit is responsible for the synthesis of L-tryptophan from indole and L-serine. This is Tryptophan synthase beta chain from Fusobacterium nucleatum subsp. nucleatum (strain ATCC 25586 / DSM 15643 / BCRC 10681 / CIP 101130 / JCM 8532 / KCTC 2640 / LMG 13131 / VPI 4355).